The chain runs to 273 residues: HUWE1-associated protein modifying stress responses 2 (273 aa).

Disordered regions lie at residues 146 to 181 (GKVP…SSSV), 204 to 230 (ISMR…FLED), and 251 to 273 (KRTS…NRMV). Residues 149–165 (PPAPPPPRTPRTPPKPP) show a composition bias toward pro residues. Composition is skewed to polar residues over residues 170-181 (SQAVATESSSSV), 208-218 (SGDSPQDSGVA), and 254-267 (SAQC…SPIQ). The segment at 249-273 (IRKRTSAQCSDGITDSPIQKRNRMV) is nuclear localization signal.

It belongs to the HAPSTR1 family. As to quaternary structure, homooligomer. Heterooligomer with HAPSTR1; the interaction is direct and stabilizes HAPSTR1 independently of HUWE1. Interacts with HUWE1. In terms of tissue distribution, expressed in a tissue-restricted manner compared to HAPSTR1.

The protein resides in the nucleus. In terms of biological role, together with HAPSTR1 plays a central regulatory role in the cellular response to molecular stressors, such as DNA damage, nutrient scarcity, and protein misfolding. Regulates these multiple stress response signaling pathways by stabilizing HAPSTR1, but also independently of HAPSTR1. This is HUWE1-associated protein modifying stress responses 2 from Homo sapiens (Human).